We begin with the raw amino-acid sequence, 447 residues long: Argininosuccinate synthase (447 aa).

Residues 17–25 (AFSGGLDTS) and alanine 43 each bind ATP. L-citrulline is bound at residue tyrosine 99. 2 residues coordinate ATP: glycine 129 and threonine 131. 3 residues coordinate L-aspartate: threonine 131, asparagine 135, and aspartate 136. Asparagine 135 is an L-citrulline binding site. Aspartate 136 contributes to the ATP binding site. Arginine 139 and serine 192 together coordinate L-citrulline. Aspartate 194 is an ATP binding site. Residues threonine 201, glutamate 203, and glutamate 280 each contribute to the L-citrulline site.

Belongs to the argininosuccinate synthase family. Type 2 subfamily. Homotetramer.

It localises to the cytoplasm. It catalyses the reaction L-citrulline + L-aspartate + ATP = 2-(N(omega)-L-arginino)succinate + AMP + diphosphate + H(+). The protein operates within amino-acid biosynthesis; L-arginine biosynthesis; L-arginine from L-ornithine and carbamoyl phosphate: step 2/3. The sequence is that of Argininosuccinate synthase from Escherichia coli O8 (strain IAI1).